A 214-amino-acid chain; its full sequence is Melanoregulin (214 aa).

The Cholesterol-binding sequence motif signature appears at 162-172; that stretch reads LSERYLLVVDR. Residue serine 213 is modified to Phosphoserine.

This sequence belongs to the melanoregulin family. Identified in a complex with RILP and DCTN1; interacts directly with RILP, but does not interact directly with DCTN1. Interacts with PRPH2. Palmitoylated. Palmitoylation is required to maintain the protein at the melanosome membrane. As to expression, detected in melanocytes. Expressed in retina, in retinal pigment epithelium (at protein level). Widely expressed with higher expression in skin, heart, liver, testis and thymus. Detected in retina, in retinal pigment epithelium cells.

Its subcellular location is the apical cell membrane. It is found in the melanosome membrane. The protein localises to the lysosome membrane. The protein resides in the cytoplasmic vesicle membrane. Probably functions as a cargo-recognition protein that couples cytoplasmic vesicles to the transport machinery. Plays a role in hair pigmentation, a process that involves shedding of melanosome-containing vesicles from melanocytes, followed by phagocytosis of the melanosome-containing vesicles by keratinocytes. Functions on melanosomes as receptor for RILP and the complex formed by RILP and DCTN1, and thereby contributes to retrograde melanosome transport from the cell periphery to the center. Overexpression causes accumulation of late endosomes and/or lysosomes at the microtubule organising center (MTOC) at the center of the cell. Probably binds cholesterol and requires the presence of cholesterol in membranes to function in microtubule-mediated retrograde organelle transport. Binds phosphatidylinositol 3-phosphate, phosphatidylinositol 4-phosphate, phosphatidylinositol 5-phosphate and phosphatidylinositol 3,5-bisphosphate, but not phosphatidylinositol 3,4-bisphosphate or phosphatidylinositol 4,5-bisphosphate. Required for normal phagosome clearing and normal activation of lysosomal enzymes in lysosomes from retinal pigment epithelium cells. Required for normal degradation of the lipofuscin component N-retinylidene-N-retinylethanolamine (A2E) in the eye. May function in membrane fusion and regulate the biogenesis of disk membranes of photoreceptor rod cells. This is Melanoregulin (Mreg) from Mus musculus (Mouse).